Consider the following 278-residue polypeptide: Formamidopyrimidine-DNA glycosylase (278 aa).

P2 serves as the catalytic Schiff-base intermediate with DNA. The Proton donor role is filled by E3. K58 (proton donor; for beta-elimination activity) is an active-site residue. Residues H91, R109, and R158 each coordinate DNA. The FPG-type zinc-finger motif lies at 243–277; it reads KVYDRKGLPCKVCKTPISQMVQGQRTTYFCSQCQK. The active-site Proton donor; for delta-elimination activity is the R267.

The protein belongs to the FPG family. As to quaternary structure, monomer. Zn(2+) is required as a cofactor.

It catalyses the reaction Hydrolysis of DNA containing ring-opened 7-methylguanine residues, releasing 2,6-diamino-4-hydroxy-5-(N-methyl)formamidopyrimidine.. The enzyme catalyses 2'-deoxyribonucleotide-(2'-deoxyribose 5'-phosphate)-2'-deoxyribonucleotide-DNA = a 3'-end 2'-deoxyribonucleotide-(2,3-dehydro-2,3-deoxyribose 5'-phosphate)-DNA + a 5'-end 5'-phospho-2'-deoxyribonucleoside-DNA + H(+). In terms of biological role, involved in base excision repair of DNA damaged by oxidation or by mutagenic agents. Acts as a DNA glycosylase that recognizes and removes damaged bases. Has a preference for oxidized purines, such as 7,8-dihydro-8-oxoguanine (8-oxoG). Has AP (apurinic/apyrimidinic) lyase activity and introduces nicks in the DNA strand. Cleaves the DNA backbone by beta-delta elimination to generate a single-strand break at the site of the removed base with both 3'- and 5'-phosphates. This Polynucleobacter necessarius subsp. necessarius (strain STIR1) protein is Formamidopyrimidine-DNA glycosylase.